A 354-amino-acid chain; its full sequence is Methionine import ATP-binding protein MetN (354 aa).

Residues 8–250 (LDHIDITFRQ…PKEALTQEFI (243 aa)) form the ABC transporter domain. 42–49 (GYSGAGKS) contributes to the ATP binding site.

Belongs to the ABC transporter superfamily. Methionine importer (TC 3.A.1.24) family. As to quaternary structure, the complex is composed of two ATP-binding proteins (MetN), two transmembrane proteins (MetI) and a solute-binding protein (MetQ).

The protein localises to the cell membrane. The enzyme catalyses L-methionine(out) + ATP + H2O = L-methionine(in) + ADP + phosphate + H(+). It catalyses the reaction D-methionine(out) + ATP + H2O = D-methionine(in) + ADP + phosphate + H(+). In terms of biological role, part of the ABC transporter complex MetNIQ involved in methionine import. Responsible for energy coupling to the transport system. The polypeptide is Methionine import ATP-binding protein MetN (Streptococcus pyogenes serotype M2 (strain MGAS10270)).